Reading from the N-terminus, the 273-residue chain is Nitrogenase iron protein 5 (273 aa).

Position 8–15 (8–15 (GKGGIGKS)) interacts with ATP. [4Fe-4S] cluster is bound at residue Cys94. Position 97 is an ADP-ribosylarginine; by dinitrogenase reductase ADP-ribosyltransferase (Arg97). [4Fe-4S] cluster is bound at residue Cys129.

This sequence belongs to the NifH/BchL/ChlL family. In terms of assembly, homodimer. Requires [4Fe-4S] cluster as cofactor. In terms of processing, the reversible ADP-ribosylation of Arg-97 inactivates the nitrogenase reductase and regulates nitrogenase activity.

It carries out the reaction N2 + 8 reduced [2Fe-2S]-[ferredoxin] + 16 ATP + 16 H2O = H2 + 8 oxidized [2Fe-2S]-[ferredoxin] + 2 NH4(+) + 16 ADP + 16 phosphate + 6 H(+). The key enzymatic reactions in nitrogen fixation are catalyzed by the nitrogenase complex, which has 2 components: the iron protein and the molybdenum-iron protein. The chain is Nitrogenase iron protein 5 (nifH5) from Clostridium pasteurianum.